The primary structure comprises 152 residues: UPF0266 membrane protein YobD (152 aa).

3 helical membrane-spanning segments follow: residues 6–26 (LVLI…QFIM), 45–65 (VDSV…VTSH), and 67–87 (AQMT…IFWI).

This sequence belongs to the UPF0266 family.

It localises to the cell inner membrane. This Salmonella enteritidis PT4 (strain P125109) protein is UPF0266 membrane protein YobD.